The chain runs to 115 residues: Large ribosomal subunit protein uL22 (115 aa).

This sequence belongs to the universal ribosomal protein uL22 family. In terms of assembly, part of the 50S ribosomal subunit.

In terms of biological role, this protein binds specifically to 23S rRNA; its binding is stimulated by other ribosomal proteins, e.g. L4, L17, and L20. It is important during the early stages of 50S assembly. It makes multiple contacts with different domains of the 23S rRNA in the assembled 50S subunit and ribosome. Its function is as follows. The globular domain of the protein is located near the polypeptide exit tunnel on the outside of the subunit, while an extended beta-hairpin is found that lines the wall of the exit tunnel in the center of the 70S ribosome. This Streptomyces avermitilis (strain ATCC 31267 / DSM 46492 / JCM 5070 / NBRC 14893 / NCIMB 12804 / NRRL 8165 / MA-4680) protein is Large ribosomal subunit protein uL22.